Reading from the N-terminus, the 327-residue chain is Delta(3,5)-Delta(2,4)-dienoyl-CoA isomerase, mitochondrial (327 aa).

Residues methionine 1–serine 33 constitute a mitochondrion transit peptide. Substrate-binding positions include serine 115–leucine 119 and glycine 173. At lysine 230 the chain carries N6-succinyllysine. Serine 267 carries the post-translational modification Phosphoserine. Lysine 316 is modified (N6-succinyllysine). The Microbody targeting signal signature appears at serine 325–leucine 327. At lysine 326 the chain carries N6-acetyllysine.

Belongs to the enoyl-CoA hydratase/isomerase family. As to quaternary structure, homohexamer. Expressed in heart and liver (at protein level).

Its subcellular location is the mitochondrion. It localises to the peroxisome. The enzyme catalyses (3E,5Z)-octadienoyl-CoA = (2E,4E)-octadienoyl-CoA. It carries out the reaction (3E,5Z,8Z,11Z,14Z)-eicosapentaenoyl-CoA = (2E,4E,8Z,11Z,14Z)-eicosapentaenoyl-CoA. Its pathway is lipid metabolism; fatty acid beta-oxidation. Isomerization of 3-trans,5-cis-dienoyl-CoA to 2-trans,4-trans-dienoyl-CoA. The protein is Delta(3,5)-Delta(2,4)-dienoyl-CoA isomerase, mitochondrial of Rattus norvegicus (Rat).